Consider the following 258-residue polypeptide: Global transcriptional regulator CodY (258 aa).

The segment at 1–156 (MSTLLDKTRK…SATIVGLEIL (156 aa)) is GAF domain. Positions 204 to 223 (ASKIADKVGITRSVIVNALR) form a DNA-binding region, H-T-H motif.

The protein belongs to the CodY family.

The protein localises to the cytoplasm. DNA-binding global transcriptional regulator which is involved in the adaptive response to starvation and acts by directly or indirectly controlling the expression of numerous genes in response to nutrient availability. During rapid exponential growth, CodY is highly active and represses genes whose products allow adaptation to nutrient depletion. This Clostridium kluyveri (strain NBRC 12016) protein is Global transcriptional regulator CodY.